Here is a 495-residue protein sequence, read N- to C-terminus: MFKKIMKGANRKASKAEANDSSMYGFDPPGRSGPGSNMIVNHASRGSLVPSSPNSMAAATTQPPPMYSVEPLPLFRDVSVSERQSLFLRKLQICCFQFDFTDTLKNAREKEIKRQTLLELVDFIQSGAGKLTEVCQEEMVKMISVNIFRCLPPASHENTGQEPADLEEEEPYLEPSWPHLQLIYELLLRYIVPSDTDTKVAKRYIDHSFVLRLLELFETEDPREREYLKTILHRIYGKFMVHRPFIRKAMNHIFYRFIYETERHSGIGELLEILGSIINGFALPMKEEHKLFLIRALIPLHKPKPIAMYHQQLSYCIVQFVEKDYKLADTVIRGLLKFWPVTNCTKEVLFLGELEEVLEATQTVEFQRCMVPLFQQIARCLSSSNFQVAERALFLWNNEHVVGLIAQNRGVILPIIFASLEKNIESHWNQAVHGLSANIKRMFMEMDPELFEECQQQYEEKQAKSKQVEEQRQNRWRRLDEAVEEREREDPMITS.

Residues 1–13 (MFKKIMKGANRKA) are compositionally biased toward basic residues. 2 disordered regions span residues 1 to 61 (MFKK…AATT) and 462 to 495 (QAKSKQVEEQRQNRWRRLDEAVEEREREDPMITS). Positions 49 to 61 (VPSSPNSMAAATT) are enriched in polar residues.

It belongs to the phosphatase 2A regulatory subunit B56 family. In terms of assembly, PP2A consists of a common heteromeric enzyme, composed of a catalytic subunit (subunits C), a constant regulatory subunit (subunit A), and a variety of regulatory subunits such as subunits B (the R2/B/PR55/B55, R3/B''/PR72/PR130/PR59 and R5/B'/B56 families). Interacts with BZR1. Interacts with BRI1. Interacts with SRK2E/OST1. In terms of tissue distribution, expressed ubiquitously, higher levels in leaves.

Its subcellular location is the nucleus. The protein localises to the cytoplasm. In terms of biological role, the B regulatory subunit may modulate substrate selectivity and catalytic activity, and may also direct the localization of the catalytic enzyme to a particular subcellular compartment. Required for the formation of the PP2A holoenzyme that positively regulates brassinosteroid signaling by dephosphorylating and activating BZR1. The chain is Serine/threonine protein phosphatase 2A 57 kDa regulatory subunit B' alpha isoform (B'ALPHA) from Arabidopsis thaliana (Mouse-ear cress).